Consider the following 159-residue polypeptide: Phosphopantetheine adenylyltransferase (159 aa).

Residue Ser9 participates in substrate binding. ATP contacts are provided by residues 9-10 and His17; that span reads SF. Residues Lys41, Leu73, and Lys87 each contribute to the substrate site. Residues 88 to 90, Glu98, and 122 to 128 contribute to the ATP site; these read GLR and YSFLSSS.

This sequence belongs to the bacterial CoaD family. Homohexamer. Requires Mg(2+) as cofactor.

It localises to the cytoplasm. The catalysed reaction is (R)-4'-phosphopantetheine + ATP + H(+) = 3'-dephospho-CoA + diphosphate. The protein operates within cofactor biosynthesis; coenzyme A biosynthesis; CoA from (R)-pantothenate: step 4/5. Reversibly transfers an adenylyl group from ATP to 4'-phosphopantetheine, yielding dephospho-CoA (dPCoA) and pyrophosphate. The sequence is that of Phosphopantetheine adenylyltransferase from Streptomyces griseus subsp. griseus (strain JCM 4626 / CBS 651.72 / NBRC 13350 / KCC S-0626 / ISP 5235).